We begin with the raw amino-acid sequence, 201 residues long: Putative ankyrin repeat protein YahD (201 aa).

ANK repeat units lie at residues 5–34 (NLPA…DINT), 38–67 (QGKT…DINK), 71–100 (TCLN…DLNC), 104–134 (FGGV…NVNQ), 138–172 (VGWT…SPHL), and 176–201 (YGKT…AAGA).

This is Putative ankyrin repeat protein YahD (yahD) from Escherichia coli (strain K12).